Consider the following 821-residue polypeptide: MVSWGRFICLVVVTMATLSLARPSFSLVEDTTLEPEEPPTKYQISQPEVYVAAPGESLEVRCLLKDAAVISWTKDGVHLGPNNRTVLIGEYLQIKGATPRDSGLYACTASRTVDSETWYFMVNVTDAISSGDDEDDTDGAEDFVSENSNNKRAPYWTNTEKMEKRLHAVPAANTVKFRCPAGGNPMPTMRWLKNGKEFKQEHRIGGYKVRNQHWSLIMESVVPSDKGNYTCVVENEYGSINHTYHLDVVERSPHRPILQAGLPANASTVVGGDVEFVCKVYSDAQPHIQWIKHVEKNGSKYGPDGLPYLKVLKAAGVNTTDKEIEVLYIRNVTFEDAGEYTCLAGNSIGISFHSAWLTVLPAPGREKEITASPDYLEIAIYCIGVFLIACMVVTVILCRMKNTTKKPDFSSQPAVHKLTKRIPLRRQVTVSAESSSSMNSNTPLVRITTRLSSTADTPMLAGVSEYELPEDPKWEFPRDKLTLGKPLGEGCFGQVVMAEAVGIDKDKPKEAVTVAVKMLKDDATEKDLSDLVSEMEMMKMIGKHKNIINLLGACTQDGPLYVIVEYASKGNLREYLRARRPPGMEYSYDINRVPEEQMTFKDLVSCTYQLARGMEYLASQKCIHRDLAARNVLVTENNVMKIADFGLARDINNIDYYKKTTNGRLPVKWMAPEALFDRVYTHQSDVWSFGVLMWEIFTLGGSPYPGIPVEELFKLLKEGHRMDKPANCTNELYMMMRDCWHAVPSQRPTFKQLVEDLDRILTLTTNEEYLDLSQPLEQYSPSYPDTRSSCSSGDDSVFSPDPMPYEPCLPQYPHINGSVKT.

The N-terminal stretch at 1 to 21 (MVSWGRFICLVVVTMATLSLA) is a signal peptide. The Extracellular segment spans residues 22 to 377 (RPSFSLVEDT…EITASPDYLE (356 aa)). The Ig-like C2-type 1 domain occupies 25–125 (FSLVEDTTLE…ETWYFMVNVT (101 aa)). Cys-62 and Cys-107 form a disulfide bridge. N-linked (GlcNAc...) asparagine glycans are attached at residues Asn-83 and Asn-123. Over residues 131 to 144 (GDDEDDTDGAEDFV) the composition is skewed to acidic residues. The interval 131-151 (GDDEDDTDGAEDFVSENSNNK) is disordered. Ig-like C2-type domains follow at residues 154-247 (PYWT…YHLD) and 256-358 (PILQ…AWLT). Positions 161-178 (KMEKRLHAVPAANTVKFR) are heparin-binding. The cysteines at positions 179 and 231 are disulfide-linked. N-linked (GlcNAc...) asparagine glycans are attached at residues Asn-228, Asn-241, Asn-265, Asn-297, Asn-318, and Asn-331. Cys-278 and Cys-342 form a disulfide bridge. The helical transmembrane segment at 378–398 (IAIYCIGVFLIACMVVTVILC) threads the bilayer. Over 399–821 (RMKNTTKKPD…YPHINGSVKT (423 aa)) the chain is Cytoplasmic. Position 466 is a phosphotyrosine; by autocatalysis (Tyr-466). The 290-residue stretch at 481-770 (LTLGKPLGEG…LTLTTNEEYL (290 aa)) folds into the Protein kinase domain. ATP is bound by residues 487–495 (LGEGCFGQV), Lys-517, 565–567 (EYA), and Asn-571. Tyr-586 and Tyr-588 each carry phosphotyrosine; by autocatalysis. The active-site Proton acceptor is Asp-626. Phosphotyrosine; by autocatalysis is present on residues Tyr-656, Tyr-657, and Tyr-769. Ser-780 is subject to Phosphoserine.

The protein belongs to the protein kinase superfamily. Tyr protein kinase family. Fibroblast growth factor receptor subfamily. As to quaternary structure, monomer. Homodimer after ligand binding. Interacts predominantly with FGF1 and FGF2, but can also interact with FGF3, FGF4, FGF6, FGF7, FGF8, FGF9, FGF10, FGF17, FGF18 and FGF22 (in vitro). Ligand specificity is determined by tissue-specific expression of isoforms, and differences in the third Ig-like domain are crucial for ligand specificity. Isoform 1 has high affinity for FGF1 and FGF2, but low affinity for FGF7. Isoform 3 has high affinity for FGF1 and FGF7, and has much higher affinity for FGF7 than isoform 1 (in vitro). Affinity for fibroblast growth factors (FGFs) is increased by heparan sulfate glycosaminoglycans that function as coreceptors. Likewise, KLB increases the affinity for FGF19 and FGF21. Interacts with PLCG1, GRB2 and PAK4. Interacts with FLRT2. In terms of processing, autophosphorylated. Binding of FGF family members together with heparan sulfate proteoglycan or heparin promotes receptor dimerization and autophosphorylation on several tyrosine residues. Autophosphorylation occurs in trans between the two FGFR molecules present in the dimer. Phosphorylation at Tyr-769 is essential for interaction with PLCG1. Post-translationally, N-glycosylated in the endoplasmic reticulum. The N-glycan chains undergo further maturation to an Endo H-resistant form in the Golgi apparatus. Ubiquitinated. FGFR2 is rapidly ubiquitinated after autophosphorylation, leading to internalization and degradation. Subject to degradation both in lysosomes and by the proteasome.

The protein localises to the cell membrane. Its subcellular location is the golgi apparatus. The protein resides in the cytoplasmic vesicle. It localises to the secreted. It carries out the reaction L-tyrosyl-[protein] + ATP = O-phospho-L-tyrosyl-[protein] + ADP + H(+). Present in an inactive conformation in the absence of bound ligand. Ligand binding leads to dimerization and activation by autophosphorylation on tyrosine residues. Inhibited by ARQ 523 and ARQ 069; these compounds maintain the kinase in an inactive conformation and inhibit autophosphorylation. Functionally, tyrosine-protein kinase that acts as a cell-surface receptor for fibroblast growth factors and plays an essential role in the regulation of cell proliferation, differentiation, migration and apoptosis, and in the regulation of embryonic development. Required for normal embryonic patterning, trophoblast function, limb bud development, lung morphogenesis, osteogenesis and skin development. Plays an essential role in the regulation of osteoblast differentiation, proliferation and apoptosis, and is required for normal skeleton development. Promotes cell proliferation in keratinocytes and immature osteoblasts, but promotes apoptosis in differentiated osteoblasts. Phosphorylates PLCG1, FRS2 and PAK4. Ligand binding leads to the activation of several signaling cascades. Activation of PLCG1 leads to the production of the cellular signaling molecules diacylglycerol and inositol 1,4,5-trisphosphate. Phosphorylation of FRS2 triggers recruitment of GRB2, GAB1, PIK3R1 and SOS1, and mediates activation of RAS, MAPK1/ERK2, MAPK3/ERK1 and the MAP kinase signaling pathway, as well as of the AKT1 signaling pathway. FGFR2 signaling is down-regulated by ubiquitination, internalization and degradation. Mutations that lead to constitutive kinase activation or impair normal FGFR2 maturation, internalization and degradation lead to aberrant signaling. Over-expressed FGFR2 promotes activation of STAT1. The chain is Fibroblast growth factor receptor 2 (FGFR2) from Homo sapiens (Human).